The sequence spans 101 residues: CRISPR-associated endoribonuclease Cas2 (101 aa).

Aspartate 8 contributes to the Mg(2+) binding site.

The protein belongs to the CRISPR-associated endoribonuclease Cas2 protein family. As to quaternary structure, homodimer, forms a heterotetramer with a Cas1 homodimer. Mg(2+) serves as cofactor.

Functionally, CRISPR (clustered regularly interspaced short palindromic repeat), is an adaptive immune system that provides protection against mobile genetic elements (viruses, transposable elements and conjugative plasmids). CRISPR clusters contain sequences complementary to antecedent mobile elements and target invading nucleic acids. CRISPR clusters are transcribed and processed into CRISPR RNA (crRNA). Functions as a ssRNA-specific endoribonuclease. Involved in the integration of spacer DNA into the CRISPR cassette. This Treponema denticola (strain ATCC 35405 / DSM 14222 / CIP 103919 / JCM 8153 / KCTC 15104) protein is CRISPR-associated endoribonuclease Cas2.